A 419-amino-acid chain; its full sequence is NF-kappa-B essential modulator (419 aa).

Residues 1–197 (MNRHLWKSQL…REALQQQHSV (197 aa)) form a required for interaction with and ubiquitination by MARCHF2 region. Ser-31 and Ser-43 each carry phosphoserine; by IKKB. Residues 44–111 (EQGAPETLQR…KLVERLGLEK (68 aa)) form an interaction with CHUK/IKBKB region. Residues 49-356 (ETLQRCLEEN…CQESARIEDM (308 aa)) adopt a coiled-coil conformation. The residue at position 68 (Ser-68) is a Phosphoserine. Ser-85 carries the phosphoserine; by ATM modification. Residues Lys-111, Lys-139, Lys-143, Lys-226, Lys-246, and Lys-264 each participate in a glycyl lysine isopeptide (Lys-Gly) (interchain with G-Cter in ubiquitin) cross-link. The interval 150–257 (LGELQESQSR…SVVGSERKRG (108 aa)) is interaction with TANK. The interval 242 to 350 (DNHIKSSVVG…SKLKASCQES (109 aa)) is ubiquitin-binding (UBAN). The self-association stretch occupies residues 246–365 (KSSVVGSERK…MRKRHVEVSQ (120 aa)). The tract at residues 251–419 (GSERKRGMQL…LQIHVMECIE (169 aa)) is required for interaction with TNFAIP3. A Glycyl lysine isopeptide (Lys-Gly) (interchain with G-Cter in SUMO); alternate cross-link involves residue Lys-277. Lys-277 is covalently cross-linked (Glycyl lysine isopeptide (Lys-Gly) (interchain with G-Cter in ubiquitin); alternate). Glycyl lysine isopeptide (Lys-Gly) (interchain with G-Cter in ubiquitin) cross-links involve residues Lys-283, Lys-285, Lys-292, and Lys-302. Lys-309 participates in a covalent cross-link: Glycyl lysine isopeptide (Lys-Gly) (interchain with G-Cter in SUMO); alternate. Lys-309 participates in a covalent cross-link: Glycyl lysine isopeptide (Lys-Gly) (interchain with G-Cter in ubiquitin); alternate. Residues Lys-321 and Lys-325 each participate in a glycyl lysine isopeptide (Lys-Gly) (interchain with G-Cter in ubiquitin) cross-link. Residues 322–343 (LAEKKELLQEQLEQLQREYSKL) are leucine-zipper. Lys-326 is covalently cross-linked (Glycyl lysine isopeptide (Lys-Gly) (interchain with G-Cter in ubiquitin and interchain with MARCHF2)). A disordered region spans residues 358–395 (KRHVEVSQAPLPPAPAYLSSPLALPSQRRSPPEEPPDF). The span at 373-386 (AYLSSPLALPSQRR) shows a compositional bias: low complexity. Ser-376 carries the post-translational modification Phosphoserine; by IKKB. The segment at 382–419 (PSQRRSPPEEPPDFCCPKCQYQAPDMDTLQIHVMECIE) is interaction with CYLD. Ser-387 is modified (phosphoserine). The segment at 389–419 (PEEPPDFCCPKCQYQAPDMDTLQIHVMECIE) adopts a CCHC NOA-type zinc-finger fold. Cys-397 lines the Zn(2+) pocket. A Glycyl lysine isopeptide (Lys-Gly) (interchain with G-Cter in ubiquitin) cross-link involves residue Lys-399. Cys-400, His-413, and Cys-417 together coordinate Zn(2+).

In terms of assembly, homodimer; disulfide-linked. Component of the I-kappa-B-kinase (IKK) core complex consisting of CHUK, IKBKB and IKBKG; probably four alpha/CHUK-beta/IKBKB dimers are associated with four gamma/IKBKG subunits. The IKK core complex seems to associate with regulatory or adapter proteins to form a IKK-signalosome holo-complex. The IKK complex associates with TERF2IP/RAP1, leading to promote IKK-mediated phosphorylation of RELA/p65. Part of a complex composed of NCOA2, NCOA3, CHUK/IKKA, IKBKB, IKBKG and CREBBP. Interacts with COPS3, CYLD, NALP2, TRPC4AP and PIDD1. Interacts with ATM; the complex is exported from the nucleus. Interacts with TRAF6. Interacts with IKBKE. Interacts with TANK; the interaction is enhanced by IKBKE and TBK1. Part of a ternary complex consisting of TANK, IKBKB and IKBKG. Interacts with ZFAND5. Interacts with RIPK2. Interacts with TNIP1 and TNFAIP3; TNIP1 facilitates the TNFAIP3-mediated de-ubiquitination of IKBKG. Interacts with TNFAIP3; the interaction is induced by TNF stimulation and by polyubiquitin. Binds (via UBAN region) polyubiquitin; binds both 'Lys-63'-linked and linear polyubiquitin, with higher affinity for linear ubiquitin. Interacts with NLRP10. Interacts with TANK; this interaction increases in response to DNA damage. Interacts with USP10; this interaction increases in response to DNA damage. Interacts with ZC3H12A; this interaction increases in response to DNA damage. Interacts with IFIT5; the interaction synergizes the recruitment of IKK to MAP3K7 and enhances IKK phosphorylation. Interacts with TRIM29; this interaction induces IKBKG/NEMO ubiquitination and proteolytic degradation. Interacts with TRIM13; this interaction leads to IKBKG/NEMO ubiquitination. Interacts with ARFIP2. Interacts with RIPK1. Interacts with (ubiquitinated) BCL10; interaction with polyubiquitinated BCL10 via both 'Lys-63'-linked and linear ubiquitin is required for TCR-induced NF-kappa-B activation. Interacts with MARCHF2; during the late stages of macrophage viral and bacterial infection; the interaction leads to ubiquitination and degradation of IKBKG/NEMO. As to quaternary structure, (Microbial infection) Interacts with Molluscum contagiosum virus protein MC005; this interaction inhibits NF-kappa-B activation. (Microbial infection) Interacts with HTLV-1 Tax oncoprotein; the interaction activates IKBKG. In terms of assembly, (Microbial infection) Interacts with Shigella flexneri ipah9.8; the interaction promotes TNIP1-dependent 'Lys-27'-linked polyubiquitination of IKBKG which perturbs NF-kappa-B activation during bacterial infection. As to quaternary structure, (Microbial infection) Interacts with SARS coronavirus-2/SARS-CoV-2 virus protein ORF9B (via N-terminus); the interaction inhibits polyubiquitination through 'Lys-63' and NF-kappa-B activation. Post-translationally, phosphorylation at Ser-68 attenuates aminoterminal homodimerization. In terms of processing, polyubiquitinated on Lys-285 via 'Lys-63'-linked ubiquitin; the ubiquitination is mediated downstream of NOD2 and RIPK2 and probably plays a role in signaling by facilitating interactions with ubiquitin domain-containing proteins and activates the NF-kappa-B pathway. Polyubiquitinated on Lys-285 and Lys-399 through 'Lys-63'-linked ubiquitin; the ubiquitination is mediated by BCL10, MALT1 and TRAF6 and probably plays a role in signaling by facilitating interactions with ubiquitin domain-containing proteins and activates the NF-kappa-B pathway. Monoubiquitinated on Lys-277 and Lys-309; promotes nuclear export. Polyubiquitinated through 'Lys-27' by TRIM23; involved in antiviral innate and inflammatory responses. Linear polyubiquitinated on Lys-111, Lys-143, Lys-226, Lys-246, Lys-264, Lys-277, Lys-285, Lys-292, Lys-302, Lys-309 and Lys-326; the head-to-tail polyubiquitination is mediated by the LUBAC complex and plays a key role in NF-kappa-B activation. Deubiquitinated by USP10 in a TANK-dependent and -independent manner, leading to the negative regulation of NF-kappa-B signaling upon DNA damage. Ubiquitinated at Lys-326 by MARCHF2 following bacterial and viral infection which leads to its degradation. Polyubiquitinated via 'Lys-29'-linked ubiquitin; leading to lysosomal degradation. Sumoylated on Lys-277 and Lys-309 with SUMO1; the modification results in phosphorylation of Ser-85 by ATM leading to a replacement of the sumoylation by mono-ubiquitination on these residues. Post-translationally, neddylated by TRIM40, resulting in stabilization of NFKBIA and down-regulation of NF-kappa-B activity. In terms of processing, (Microbial infection) Cleaved by hepatitis A virus (HAV) protease 3C allowing the virus to disrupt the host innate immune signaling. (Microbial infection) Deubiquitinated by Epstein-Barr virus BPLF1 on both 'Lys-48' and 'Lys-63'-linked ubiquitin chains; leading to NF-kappa-B signaling inhibition. Post-translationally, (Microbial infection) Polyubiquitinated on Lys-309 and Lys-321 via 'Lys-27'-linked ubiquitin by Shigella flexneri E3 ubiquitin-protein ligase ipah9.8, leading to its degradation by the proteasome. In terms of processing, (Microbial infection) Polyubiquitination through 'Lys-63' is interrupted by interaction with SARS coronavirus-2/SARS-CoV-2 virus protein ORF9B which inhibits the NF-kappa-B pathway. As to expression, heart, brain, placenta, lung, liver, skeletal muscle, kidney and pancreas.

The protein localises to the cytoplasm. It is found in the nucleus. In terms of biological role, regulatory subunit of the IKK core complex which phosphorylates inhibitors of NF-kappa-B thus leading to the dissociation of the inhibitor/NF-kappa-B complex and ultimately the degradation of the inhibitor. Its binding to scaffolding polyubiquitin plays a key role in IKK activation by multiple signaling receptor pathways. Can recognize and bind both 'Lys-63'-linked and linear polyubiquitin upon cell stimulation, with a much higher affinity for linear polyubiquitin. Could be implicated in NF-kappa-B-mediated protection from cytokine toxicity. Essential for viral activation of IRF3. Involved in TLR3- and IFIH1-mediated antiviral innate response; this function requires 'Lys-27'-linked polyubiquitination. Functionally, (Microbial infection) Also considered to be a mediator for HTLV-1 Tax oncoprotein activation of NF-kappa-B. This is NF-kappa-B essential modulator from Homo sapiens (Human).